A 237-amino-acid chain; its full sequence is Probable transcriptional regulatory protein MCAP_0598 (237 aa).

The protein belongs to the TACO1 family.

The protein localises to the cytoplasm. This Mycoplasma capricolum subsp. capricolum (strain California kid / ATCC 27343 / NCTC 10154) protein is Probable transcriptional regulatory protein MCAP_0598.